Consider the following 453-residue polypeptide: Beta-agarase AgaB34 (453 aa).

An N-terminal signal peptide occupies residues 1-23; the sequence is MKGFTKHSILMACSIGLAINATA. In terms of domain architecture, GH16 spans 24–301; it reads ADWDNIPIPA…WIRVYKPTGG (278 aa). The active-site Nucleophile is the E147. The Proton donor role is filled by E152. The Ricin B-type lectin domain occupies 313 to 453; the sequence is PSGYTNLQLA…GATNQRFKFL (141 aa). 3 disulfides stabilise this stretch: C327–C346, C375–C394, and C423–C442.

This sequence belongs to the glycosyl hydrolase 16 family.

The protein localises to the secreted. It carries out the reaction Hydrolysis of (1-&gt;4)-beta-D-galactosidic linkages in agarose, giving the tetramer as the predominant product.. This Agarivorans albus protein is Beta-agarase AgaB34.